The primary structure comprises 148 residues: uncharacterized protein (148 aa).

A run of 3 helical transmembrane segments spans residues 25–45 (FCTV…LLTA), 85–105 (IVRF…LLYL), and 118–138 (LAAT…WVFG).

It belongs to the GtrA family.

It localises to the cell membrane. This is an uncharacterized protein from Bacillus subtilis (strain 168).